A 478-amino-acid polypeptide reads, in one-letter code: Ribulose bisphosphate carboxylase large chain (478 aa).

A propeptide spanning residues 1-2 (MS) is cleaved from the precursor. An N-acetylproline modification is found at Pro3. Lys14 carries the post-translational modification N6,N6,N6-trimethyllysine. Residues Asn123 and Thr173 each coordinate substrate. The active-site Proton acceptor is Lys175. Lys177 serves as a coordination point for substrate. Mg(2+) is bound by residues Lys201, Asp203, and Glu204. Lys201 is modified (N6-carboxylysine). His294 functions as the Proton acceptor in the catalytic mechanism. Substrate is bound by residues Arg295, His327, and Ser379.

The protein belongs to the RuBisCO large chain family. Type I subfamily. In terms of assembly, heterohexadecamer of 8 large chains and 8 small chains; disulfide-linked. The disulfide link is formed within the large subunit homodimers. Mg(2+) is required as a cofactor. Post-translationally, the disulfide bond which can form in the large chain dimeric partners within the hexadecamer appears to be associated with oxidative stress and protein turnover.

It is found in the plastid. Its subcellular location is the chloroplast. It catalyses the reaction 2 (2R)-3-phosphoglycerate + 2 H(+) = D-ribulose 1,5-bisphosphate + CO2 + H2O. It carries out the reaction D-ribulose 1,5-bisphosphate + O2 = 2-phosphoglycolate + (2R)-3-phosphoglycerate + 2 H(+). Functionally, ruBisCO catalyzes two reactions: the carboxylation of D-ribulose 1,5-bisphosphate, the primary event in carbon dioxide fixation, as well as the oxidative fragmentation of the pentose substrate in the photorespiration process. Both reactions occur simultaneously and in competition at the same active site. This chain is Ribulose bisphosphate carboxylase large chain, found in Neurachne munroi.